A 49-amino-acid polypeptide reads, in one-letter code: MPEAVYRCAKCGREVKLDLSTTRDLRCPYCGSKILYKPRPKIPRRVKAI.

The Zn(2+) site is built by cysteine 11, cysteine 27, and cysteine 30.

The protein belongs to the archaeal Rpo12/eukaryotic RPC10 RNA polymerase subunit family. As to quaternary structure, part of the RNA polymerase complex. Zn(2+) is required as a cofactor.

The protein localises to the cytoplasm. The catalysed reaction is RNA(n) + a ribonucleoside 5'-triphosphate = RNA(n+1) + diphosphate. DNA-dependent RNA polymerase (RNAP) catalyzes the transcription of DNA into RNA using the four ribonucleoside triphosphates as substrates. In Pyrococcus horikoshii (strain ATCC 700860 / DSM 12428 / JCM 9974 / NBRC 100139 / OT-3), this protein is DNA-directed RNA polymerase subunit Rpo12.